Consider the following 374-residue polypeptide: Protein-glutamate methylesterase/protein-glutamine glutaminase 1 (374 aa).

The region spanning 4-121 is the Response regulatory domain; that stretch reads KVLVVDDSSF…ATNKDEAILL (118 aa). 4-aspartylphosphate is present on Asp55. The segment at 141–170 is disordered; that stretch reads PSVAPVTPRPTTGSAVGNATTPVQSASAPV. The span at 149 to 167 shows a compositional bias: polar residues; sequence RPTTGSAVGNATTPVQSAS. A CheB-type methylesterase domain is found at 174 to 374; sequence PLSSIRASGK…ESILKESARG (201 aa). Catalysis depends on residues Ser193, His220, and Asp316.

This sequence belongs to the CheB family. Post-translationally, phosphorylated by CheA. Phosphorylation of the N-terminal regulatory domain activates the methylesterase activity.

It is found in the cytoplasm. It carries out the reaction [protein]-L-glutamate 5-O-methyl ester + H2O = L-glutamyl-[protein] + methanol + H(+). The catalysed reaction is L-glutaminyl-[protein] + H2O = L-glutamyl-[protein] + NH4(+). In terms of biological role, involved in chemotaxis. Part of a chemotaxis signal transduction system that modulates chemotaxis in response to various stimuli. Catalyzes the demethylation of specific methylglutamate residues introduced into the chemoreceptors (methyl-accepting chemotaxis proteins or MCP) by CheR. Also mediates the irreversible deamidation of specific glutamine residues to glutamic acid. The sequence is that of Protein-glutamate methylesterase/protein-glutamine glutaminase 1 from Shewanella oneidensis (strain ATCC 700550 / JCM 31522 / CIP 106686 / LMG 19005 / NCIMB 14063 / MR-1).